The chain runs to 349 residues: Protein Wnt-7b (349 aa).

Residues 1–24 form the signal peptide; that stretch reads MHRNFRKWIFYVFLCFGVLYVKLG. Intrachain disulfides connect Cys-73/Cys-84, Cys-123/Cys-131, Cys-133/Cys-152, Cys-200/Cys-214, and Cys-202/Cys-209. N-linked (GlcNAc...) asparagine glycans are attached at residues Asn-83 and Asn-127. A lipid anchor (O-palmitoleoyl serine; by PORCN) is attached at Ser-206. Residues 238–266 form a disordered linker region; it reads VEVVRASRLRQPTFLRIKQLRSYQKPMET. 6 disulfide bridges follow: Cys-278–Cys-309, Cys-294–Cys-304, Cys-308–Cys-348, Cys-324–Cys-339, Cys-326–Cys-336, and Cys-331–Cys-332. N-linked (GlcNAc...) asparagine glycosylation occurs at Asn-295.

Belongs to the Wnt family. In terms of assembly, forms a soluble 1:1 complex with AFM; this prevents oligomerization and is required for prolonged biological activity. The complex with AFM may represent the physiological form in body fluids. Interacts with FZD1 and FZD10. Interacts with FZD4 (in vitro). Interacts with PORCN. Interacts with glypican GPC3. Interacts (via intrinsically disordered linker region) with RECK; interaction with RECK confers ligand selectivity for Wnt7 in brain endothelial cells and allows these cells to selectively respond to Wnt7. In terms of processing, palmitoleoylation is required for efficient binding to frizzled receptors. Depalmitoleoylation leads to Wnt signaling pathway inhibition. In terms of tissue distribution, moderately expressed in fetal brain, weakly expressed in fetal lung and kidney, and faintly expressed in adult brain, lung and prostate.

Its subcellular location is the secreted. It localises to the extracellular space. The protein localises to the extracellular matrix. Its function is as follows. Ligand for members of the frizzled family of seven transmembrane receptors that functions in the canonical Wnt/beta-catenin signaling pathway. Required for normal fusion of the chorion and the allantois during placenta development. Required for central nervous system (CNS) angiogenesis and blood-brain barrier regulation. In Homo sapiens (Human), this protein is Protein Wnt-7b (WNT7B).